A 170-amino-acid chain; its full sequence is Photosystem II extrinsic protein V (170 aa).

An N-terminal signal peptide occupies residues 1–34; that stretch reads MNKILGIDPLKKFIFGISAFVLLFWQLNVGAANA. Heme c-binding residues include Cys-70, Cys-73, His-74, and His-125.

Belongs to the cytochrome c family. PsbV subfamily. As to quaternary structure, PSII is composed of 1 copy each of membrane proteins PsbA, PsbB, PsbC, PsbD, PsbE, PsbF, PsbH, PsbI, PsbJ, PsbK, PsbL, PsbM, PsbT, PsbX, PsbY, PsbZ, Psb30/Ycf12, peripheral proteins PsbO, CyanoQ (PsbQ), PsbU, PsbV and a large number of cofactors. It forms dimeric complexes. The cofactor is heme c.

It is found in the cellular thylakoid membrane. One of the extrinsic, lumenal subunits of photosystem II (PSII). PSII is a light-driven water plastoquinone oxidoreductase, using light energy to abstract electrons from H(2)O, generating a proton gradient subsequently used for ATP formation. The extrinsic proteins stabilize the structure of photosystem II oxygen-evolving complex (OEC), the ion environment of oxygen evolution and protect the OEC against heat-induced inactivation. Low-potential cytochrome c that plays a role in the OEC of PSII. The chain is Photosystem II extrinsic protein V from Picosynechococcus sp. (strain ATCC 27264 / PCC 7002 / PR-6) (Agmenellum quadruplicatum).